Reading from the N-terminus, the 408-residue chain is NADH-quinone oxidoreductase subunit H (408 aa).

The next 9 membrane-spanning stretches (helical) occupy residues 18 to 38 (LAKA…AILI), 84 to 104 (PIYL…FSVI), 124 to 144 (LPVA…GIVL), 165 to 185 (VVSY…YAGT), 198 to 218 (TWFV…MVGE), 261 to 281 (SALA…FNLI), 288 to 308 (WWPL…YFWL), 321 to 341 (MALG…VVAI), and 353 to 373 (WAAW…WGLA). Residues 381 to 408 (VQPPPPQSTGAYPVPPLPSVGTKETADA) form a disordered region. Residues 382–398 (QPPPPQSTGAYPVPPLP) are compositionally biased toward pro residues.

Belongs to the complex I subunit 1 family. In terms of assembly, NDH-1 is composed of 14 different subunits. Subunits NuoA, H, J, K, L, M, N constitute the membrane sector of the complex.

The protein resides in the cell membrane. It carries out the reaction a quinone + NADH + 5 H(+)(in) = a quinol + NAD(+) + 4 H(+)(out). NDH-1 shuttles electrons from NADH, via FMN and iron-sulfur (Fe-S) centers, to quinones in the respiratory chain. The immediate electron acceptor for the enzyme in this species is believed to be menaquinone. Couples the redox reaction to proton translocation (for every two electrons transferred, four hydrogen ions are translocated across the cytoplasmic membrane), and thus conserves the redox energy in a proton gradient. This subunit may bind ubiquinone. The sequence is that of NADH-quinone oxidoreductase subunit H from Mycolicibacterium smegmatis (strain ATCC 700084 / mc(2)155) (Mycobacterium smegmatis).